The primary structure comprises 1891 residues: Protein TIC 214 (1891 aa).

6 consecutive transmembrane segments (helical) span residues 18–38 (IINS…FSIG), 64–84 (FITG…HLAL), 87–107 (PHTI…WNNH), 124–144 (LSIQ…HFIL), 172–192 (VGWL…LVWI), and 221–241 (IFSI…PSPI). Disordered stretches follow at residues 248-300 (EASK…EGWD), 788-807 (EEQT…DNKR), and 1580-1607 (KNRS…NLSP). Positions 256-268 (VESEEERDVEIET) are enriched in acidic residues. Basic and acidic residues predominate over residues 1582–1601 (RSQEAKEPPSQRERGSDIEN).

Belongs to the TIC214 family. As to quaternary structure, part of the Tic complex.

Its subcellular location is the plastid. It is found in the chloroplast inner membrane. In terms of biological role, involved in protein precursor import into chloroplasts. May be part of an intermediate translocation complex acting as a protein-conducting channel at the inner envelope. This is Protein TIC 214 from Solanum lycopersicum (Tomato).